Reading from the N-terminus, the 121-residue chain is Large ribosomal subunit protein uL18 (121 aa).

It belongs to the universal ribosomal protein uL18 family. In terms of assembly, part of the 50S ribosomal subunit; part of the 5S rRNA/L5/L18/L25 subcomplex. Contacts the 5S and 23S rRNAs.

In terms of biological role, this is one of the proteins that bind and probably mediate the attachment of the 5S RNA into the large ribosomal subunit, where it forms part of the central protuberance. The polypeptide is Large ribosomal subunit protein uL18 (Ureaplasma urealyticum serovar 10 (strain ATCC 33699 / Western)).